Reading from the N-terminus, the 599-residue chain is Adenine deaminase (599 aa).

It belongs to the metallo-dependent hydrolases superfamily. Adenine deaminase family. The cofactor is Mn(2+).

It catalyses the reaction adenine + H2O + H(+) = hypoxanthine + NH4(+). This Clostridium botulinum (strain 657 / Type Ba4) protein is Adenine deaminase.